We begin with the raw amino-acid sequence, 166 residues long: Ribosome maturation factor RimP (166 aa).

Belongs to the RimP family.

The protein resides in the cytoplasm. In terms of biological role, required for maturation of 30S ribosomal subunits. This Psychrobacter arcticus (strain DSM 17307 / VKM B-2377 / 273-4) protein is Ribosome maturation factor RimP.